Here is a 197-residue protein sequence, read N- to C-terminus: 3-isopropylmalate dehydratase small subunit (197 aa).

Belongs to the LeuD family. LeuD type 1 subfamily. Heterodimer of LeuC and LeuD.

It carries out the reaction (2R,3S)-3-isopropylmalate = (2S)-2-isopropylmalate. It participates in amino-acid biosynthesis; L-leucine biosynthesis; L-leucine from 3-methyl-2-oxobutanoate: step 2/4. In terms of biological role, catalyzes the isomerization between 2-isopropylmalate and 3-isopropylmalate, via the formation of 2-isopropylmaleate. The polypeptide is 3-isopropylmalate dehydratase small subunit (Geobacillus kaustophilus (strain HTA426)).